A 227-amino-acid polypeptide reads, in one-letter code: Small ribosomal subunit protein uS7 (227 aa).

Acidic residues-rich tracts occupy residues 1 to 12 (MSESDTDPDIDD) and 20 to 31 (NDVDVAVDESES). A disordered region spans residues 1–43 (MSESDTDPDIDDDAHNNGDNDVDVAVDESESAETTTDTDTASA). Over residues 32-43 (AETTTDTDTASA) the composition is skewed to low complexity.

It belongs to the universal ribosomal protein uS7 family. In terms of assembly, part of the 30S ribosomal subunit.

Functionally, one of the primary rRNA binding proteins, it binds directly to 16S rRNA where it nucleates assembly of the head domain of the 30S subunit. Is located at the subunit interface close to the decoding center. In Haloquadratum walsbyi (strain DSM 16790 / HBSQ001), this protein is Small ribosomal subunit protein uS7.